We begin with the raw amino-acid sequence, 469 residues long: ATP synthase subunit beta (469 aa).

153–160 (GGAGVGKT) is a binding site for ATP.

It belongs to the ATPase alpha/beta chains family. F-type ATPases have 2 components, CF(1) - the catalytic core - and CF(0) - the membrane proton channel. CF(1) has five subunits: alpha(3), beta(3), gamma(1), delta(1), epsilon(1). CF(0) has three main subunits: a(1), b(2) and c(9-12). The alpha and beta chains form an alternating ring which encloses part of the gamma chain. CF(1) is attached to CF(0) by a central stalk formed by the gamma and epsilon chains, while a peripheral stalk is formed by the delta and b chains.

The protein resides in the cell inner membrane. It catalyses the reaction ATP + H2O + 4 H(+)(in) = ADP + phosphate + 5 H(+)(out). Functionally, produces ATP from ADP in the presence of a proton gradient across the membrane. The catalytic sites are hosted primarily by the beta subunits. This Pseudothermotoga lettingae (strain ATCC BAA-301 / DSM 14385 / NBRC 107922 / TMO) (Thermotoga lettingae) protein is ATP synthase subunit beta.